The chain runs to 262 residues: ClpXP adapter protein SpxH (262 aa).

The protein belongs to the SpxH family. Interacts with Spx.

Its subcellular location is the cytoplasm. Adapter protein required for efficient degradation of Spx by ClpXP under non-stress conditions. Interaction with Spx stabilizes Spx and exposes the C-terminus of Spx for recognition and proteolysis by ClpXP. In Staphylococcus saprophyticus subsp. saprophyticus (strain ATCC 15305 / DSM 20229 / NCIMB 8711 / NCTC 7292 / S-41), this protein is ClpXP adapter protein SpxH.